The primary structure comprises 130 residues: MAENQYYGTGRRKSSSARVFLKPGSGKIVINQRSLEVYFGRETARMVVNQPLELVDMVTKFDMYITVKGGGISGQAGAIRHGITRALMEYDESLRGELRKAGFVTRDAREVERKKVGLRKARRRPQFSKR.

This sequence belongs to the universal ribosomal protein uS9 family.

This is Small ribosomal subunit protein uS9 from Yersinia pseudotuberculosis serotype O:1b (strain IP 31758).